Consider the following 62-residue polypeptide: Ferredoxin-1 (62 aa).

2 4Fe-4S ferredoxin-type domains span residues 3-32 and 33-62; these read WTVT…LQDG and KAVP…VEEN. Residues C12 and C18 each contribute to the [3Fe-4S] cluster site. The [4Fe-4S] cluster site is built by C22, C42, C45, and C48. [3Fe-4S] cluster is bound at residue C52.

As to quaternary structure, homodimer. [3Fe-4S] cluster is required as a cofactor. Requires [4Fe-4S] cluster as cofactor.

In terms of biological role, ferredoxins are iron-sulfur proteins that transfer electrons in a wide variety of metabolic reactions. This ferredoxin serves as a carrier for pyruvate dehydrogenase. The chain is Ferredoxin-1 from Nitratidesulfovibrio vulgaris (strain DSM 19637 / Miyazaki F) (Desulfovibrio vulgaris).